The sequence spans 273 residues: NLP effector protein 10 (273 aa).

The first 21 residues, M1–A21, serve as a signal peptide directing secretion. N-linked (GlcNAc...) asparagine glycosylation is present at N91. The Conserved undecapeptide motif motif lies at A129–A139. Positions G149–L155 match the Conserved heptapeptide motif motif.

It belongs to the Necrosis inducing protein (NPP1) family.

The protein resides in the secreted. In terms of biological role, secreted effector that acts as a pathogen-associated molecular pattern (PAMP) recognized by the plant immune system. Seems not to induce necrosis in Nicotiana benthamiana leaves but significantly improves disease resistance of Arabidopsis thaliana to Hyaloperonospora arabidopsidis and causes an inhibition of plant growth which is typically associated with enhanced immunity when over-expressed in Arabidopsis. The chain is NLP effector protein 10 from Plasmopara viticola (Downy mildew of grapevine).